A 170-amino-acid polypeptide reads, in one-letter code: Large ribosomal subunit protein uL10 (170 aa).

It belongs to the universal ribosomal protein uL10 family. As to quaternary structure, part of the ribosomal stalk of the 50S ribosomal subunit. The N-terminus interacts with L11 and the large rRNA to form the base of the stalk. The C-terminus forms an elongated spine to which L12 dimers bind in a sequential fashion forming a multimeric L10(L12)X complex.

Forms part of the ribosomal stalk, playing a central role in the interaction of the ribosome with GTP-bound translation factors. The sequence is that of Large ribosomal subunit protein uL10 from Chlamydia caviae (strain ATCC VR-813 / DSM 19441 / 03DC25 / GPIC) (Chlamydophila caviae).